The following is a 109-amino-acid chain: Large ribosomal subunit protein uL22 (109 aa).

Belongs to the universal ribosomal protein uL22 family. Part of the 50S ribosomal subunit.

This protein binds specifically to 23S rRNA; its binding is stimulated by other ribosomal proteins, e.g. L4, L17, and L20. It is important during the early stages of 50S assembly. It makes multiple contacts with different domains of the 23S rRNA in the assembled 50S subunit and ribosome. Its function is as follows. The globular domain of the protein is located near the polypeptide exit tunnel on the outside of the subunit, while an extended beta-hairpin is found that lines the wall of the exit tunnel in the center of the 70S ribosome. The chain is Large ribosomal subunit protein uL22 from Methylibium petroleiphilum (strain ATCC BAA-1232 / LMG 22953 / PM1).